The sequence spans 190 residues: Xanthine phosphoribosyltransferase (190 aa).

2 residues coordinate xanthine: leucine 20 and asparagine 27. Residue 128-132 (ANGHA) participates in 5-phospho-alpha-D-ribose 1-diphosphate binding. A xanthine-binding site is contributed by lysine 156.

It belongs to the purine/pyrimidine phosphoribosyltransferase family. Xpt subfamily. In terms of assembly, homodimer.

It localises to the cytoplasm. The catalysed reaction is XMP + diphosphate = xanthine + 5-phospho-alpha-D-ribose 1-diphosphate. Its pathway is purine metabolism; XMP biosynthesis via salvage pathway; XMP from xanthine: step 1/1. Functionally, converts the preformed base xanthine, a product of nucleic acid breakdown, to xanthosine 5'-monophosphate (XMP), so it can be reused for RNA or DNA synthesis. This chain is Xanthine phosphoribosyltransferase, found in Pseudomonas paraeruginosa (strain DSM 24068 / PA7) (Pseudomonas aeruginosa (strain PA7)).